The sequence spans 327 residues: MKKIIKVEAVEKHFGNQVIIPPLSLDIKEGEFLTILGPSGCGKTTLLRMIAGFETPTKGNLLLDDEKINDLPPYKRHMNLVFQHYALFPHMNVEKNICFGMKMQKVPAAEQKERAEEAMRLTQLLEFRNRKPAKLSGGQQQRVAIARAIVNNPRVLLLDEPLGALDFKLRKDLQRELKNLQRNLGITFIYVTHDQEEAMSMSDRIVVMNKGHIEQIGTPKEIYNKPKTLFVATFIGENNIVKNGEGYVAIRPENVKVRSVEERILKEYHLGHIEDIEFVGNMEKLYVRDEKTSELLMAYQTAEEAAQWSIGDNVYVGWEQEDEVTLN.

An ABC transporter domain is found at 5 to 235 (IKVEAVEKHF…PKTLFVATFI (231 aa)). Position 37–44 (37–44 (GPSGCGKT)) interacts with ATP.

This sequence belongs to the ABC transporter superfamily. Spermidine/putrescine importer (TC 3.A.1.11.1) family. As to quaternary structure, the complex is composed of two ATP-binding proteins (PotA), two transmembrane proteins (PotB and PotC) and a solute-binding protein (PotD).

The protein resides in the cell membrane. It carries out the reaction ATP + H2O + polyamine-[polyamine-binding protein]Side 1 = ADP + phosphate + polyamineSide 2 + [polyamine-binding protein]Side 1.. Part of the ABC transporter complex PotABCD involved in spermidine/putrescine import. Responsible for energy coupling to the transport system. The protein is Spermidine/putrescine import ATP-binding protein PotA of Bacillus thuringiensis subsp. konkukian (strain 97-27).